Reading from the N-terminus, the 239-residue chain is tRNA1(Val) (adenine(37)-N6)-methyltransferase (239 aa).

This sequence belongs to the methyltransferase superfamily. tRNA (adenine-N(6)-)-methyltransferase family.

Its subcellular location is the cytoplasm. It carries out the reaction adenosine(37) in tRNA1(Val) + S-adenosyl-L-methionine = N(6)-methyladenosine(37) in tRNA1(Val) + S-adenosyl-L-homocysteine + H(+). Specifically methylates the adenine in position 37 of tRNA(1)(Val) (anticodon cmo5UAC). This chain is tRNA1(Val) (adenine(37)-N6)-methyltransferase, found in Vibrio vulnificus (strain YJ016).